A 411-amino-acid chain; its full sequence is 2,3-bisphosphoglycerate-independent phosphoglycerate mutase (411 aa).

The segment at 164-190 (VSSNDPKKEGVQPLTIRPGSDDPADAK) is disordered.

It belongs to the BPG-independent phosphoglycerate mutase family. A-PGAM subfamily.

It carries out the reaction (2R)-2-phosphoglycerate = (2R)-3-phosphoglycerate. It functions in the pathway carbohydrate degradation; glycolysis; pyruvate from D-glyceraldehyde 3-phosphate: step 3/5. Catalyzes the interconversion of 2-phosphoglycerate and 3-phosphoglycerate. The chain is 2,3-bisphosphoglycerate-independent phosphoglycerate mutase from Methanoculleus marisnigri (strain ATCC 35101 / DSM 1498 / JR1).